The primary structure comprises 743 residues: Sulfhydryl oxidase 1 (743 aa).

The signal sequence occupies residues 1 to 42 (MWRRRARSGGGGGGGGGGAAPRCRWWPAVLALLAAALPAARS). Residues 43–166 (RSLYSPSDPL…LRRAIITNLE (124 aa)) form the Thioredoxin domain. Active-site nucleophile residues include Cys80 and Cys83. 2 cysteine pairs are disulfide-bonded: Cys80–Cys83 and Cys111–Cys120. Asn254, Asn288, Asn295, Asn371, and Asn401 each carry an N-linked (GlcNAc...) asparagine glycan. Cys407 and Cys419 form a disulfide bridge. In terms of domain architecture, ERV/ALR sulfhydryl oxidase spans 410-513 (SEPHFRGYPC…EDPQFPKLQW (104 aa)). Residues Arg415, Trp422, His426, Glu461, His465, 488-495 (WSHHNEVN), Lys510, and Trp513 contribute to the FAD site. Cysteines 459 and 462 form a disulfide. Cys519 and Cys522 are disulfide-bonded. The tract at residues 567 to 617 (ASARLSTAGLREKEEEERKEEEEEGEKETEKPHREGETGRPGSSELRRPSI) is disordered. Positions 580-593 (EEEERKEEEEEGEK) are enriched in acidic residues. Over residues 594 to 604 (ETEKPHREGET) the composition is skewed to basic and acidic residues. The chain crosses the membrane as a helical span at residues 707-727 (SLCIALYFLSSMCLLGMYTFF).

The protein belongs to the quiescin-sulfhydryl oxidase (QSOX) family. FAD serves as cofactor. In terms of processing, N-glycosylated. O-glycosylated on Thr and Ser residues.

Its subcellular location is the golgi apparatus membrane. The protein localises to the secreted. It catalyses the reaction 2 R'C(R)SH + O2 = R'C(R)S-S(R)CR' + H2O2. Its function is as follows. Catalyzes the oxidation of sulfhydryl groups in peptide and protein thiols to disulfides with the reduction of oxygen to hydrogen peroxide. Plays a role in disulfide bond formation in a variety of extracellular proteins. In fibroblasts, required for normal incorporation of laminin into the extracellular matrix, and thereby for normal cell-cell adhesion and cell migration. The protein is Sulfhydryl oxidase 1 (QSOX1) of Gallus gallus (Chicken).